The sequence spans 377 residues: Ejaculatory bulb-specific protein 1 (377 aa).

An N-terminal signal peptide occupies residues Met1–Ala20. The tract at residues Pro155 to Gly253 is disordered. Positions Gly165 to Pro228 are enriched in pro residues.

In terms of tissue distribution, specifically expressed in the ejaculatory bulb and seminal fluid. Detected in mated females 3 minutes after the start of mating, and for at least 3 hours after the start of mating.

The protein resides in the secreted. Its function is as follows. Major protein component of the posterior mating plug. Accessory gland proteins constitute, or are required for formation of the anterior mating plug. Posterior mating plug forms before sperm transfer and the anterior mating plug is formed after the start of mating. The chain is Ejaculatory bulb-specific protein 1 from Drosophila melanogaster (Fruit fly).